A 498-amino-acid chain; its full sequence is Flagellin (498 aa).

It belongs to the bacterial flagellin family.

It is found in the secreted. The protein localises to the bacterial flagellum. Its function is as follows. Flagellin is the subunit protein which polymerizes to form the filaments of bacterial flagella. The protein is Flagellin (fliC) of Escherichia coli (strain K12).